The following is a 250-amino-acid chain: Small ribosomal subunit protein uS2 (250 aa).

This sequence belongs to the universal ribosomal protein uS2 family.

In Marinobacter nauticus (strain ATCC 700491 / DSM 11845 / VT8) (Marinobacter aquaeolei), this protein is Small ribosomal subunit protein uS2.